Here is a 422-residue protein sequence, read N- to C-terminus: Adhesin YadA (422 aa).

Positions 1-25 (MTKDFKISVSAALISALFSSPYAFA) are cleaved as a signal peptide. A surface exposed passenger domain region spans residues 26 to 330 (NNDEVHFTAV…KKAIRESNQY (305 aa)). A coiled-coil region spans residues 206–236 (VNVAQLKKEIEKTQVNANKKSAEVLGIANNY). The outer membrane translocation of the passenger domain stretch occupies residues 331 to 368 (TDHKFRQLDNRLDKLDTRVDKGLASSAALNSLFQPYGV). 4 beta stranded membrane-spanning segments follow: residues 369–379 (GKVNFTAGVGG), 383–394 (SQALAIGSGYRV), 401–407 (KAGVAYA), and 411–422 (DVMYNASFNIEW). Positions 369–422 (GKVNFTAGVGGYRSSQALAIGSGYRVNESVALKAGVAYAGSSDVMYNASFNIEW) are translocator domain.

This sequence belongs to the autotransporter-2 (AT-2) (TC 1.B.40) family. Homotrimer; trimers are very stable, not disrupted by heating at 95 degrees Celsius for 10 minutes in SDS sample buffer.

The protein resides in the cell surface. It localises to the cell outer membrane. Functionally, collagen-binding outer membrane protein forming a fibrillar matrix on the bacterial cell surface and phagocytosis resistance. Promotes initial attachment and invasion of eukaryotic cells. Also protects the bacteria by being responsible for agglutination, serum resistance and complement inactivation. Gly-389 plays an important role in this protein; replacing it with increasingly large polar residues decreases expression levels and trimer stability. Residues larger than Ser (Thr, Asn or His) significantly decrease serume resistance and bacterial autoagglution without affecting adhesion to host cells or host cell cytokine production. This Yersinia enterocolitica serotype O:8 / biotype 1B (strain NCTC 13174 / 8081) protein is Adhesin YadA.